We begin with the raw amino-acid sequence, 432 residues long: Adenylosuccinate synthetase (432 aa).

GTP contacts are provided by residues 13-19 and 41-43; these read GDEGKGK and GHT. The active-site Proton acceptor is aspartate 14. Mg(2+)-binding residues include aspartate 14 and glycine 41. IMP contacts are provided by residues 14-17, 39-42, threonine 130, arginine 144, glutamine 225, threonine 240, and arginine 304; these read DEGK and NAGH. Histidine 42 (proton donor) is an active-site residue. 300-306 lines the substrate pocket; that stretch reads AVTGRPR. GTP-binding positions include arginine 306, 332 to 334, and 415 to 417; these read KLD and STG.

The protein belongs to the adenylosuccinate synthetase family. As to quaternary structure, homodimer. It depends on Mg(2+) as a cofactor.

The protein localises to the cytoplasm. It catalyses the reaction IMP + L-aspartate + GTP = N(6)-(1,2-dicarboxyethyl)-AMP + GDP + phosphate + 2 H(+). The protein operates within purine metabolism; AMP biosynthesis via de novo pathway; AMP from IMP: step 1/2. Plays an important role in the de novo pathway of purine nucleotide biosynthesis. Catalyzes the first committed step in the biosynthesis of AMP from IMP. The chain is Adenylosuccinate synthetase from Actinobacillus succinogenes (strain ATCC 55618 / DSM 22257 / CCUG 43843 / 130Z).